Here is a 463-residue protein sequence, read N- to C-terminus: Matrix remodeling-associated protein 8 (463 aa).

Positions 1-19 are cleaved as a signal peptide; sequence MELRAWVLLWRLVLLQSSA. Over 20-362 the chain is Extracellular; it reads VLLSSGPSGP…PEGRAHFFQQ (343 aa). Ig-like V-type domains follow at residues 29–173 and 176–308; these read PATS…LEVT and PRAA…LRVT. 2 cysteine pairs are disulfide-bonded: Cys-54–Cys-153 and Cys-202–Cys-288. N-linked (GlcNAc...) asparagine glycosylation is present at Asn-135. Residue Ser-244 is modified to Phosphoserine. An RGD motif is present at residues 268 to 270; it reads RGD. The interval 309–341 is disordered; the sequence is EPAARPPPPPRDSPGNGSSHSGAPGPGARDPTL. Low complexity predominate over residues 321 to 335; the sequence is SPGNGSSHSGAPGPG. Asn-324 carries N-linked (GlcNAc...) asparagine glycosylation. Residues 363–383 form a helical membrane-spanning segment; sequence LGYVLATLLLFILLLITVVLA. Topologically, residues 384 to 463 are cytoplasmic; it reads TRQRRRGGYE…DKEFRKEYCK (80 aa).

In terms of assembly, homodimer in cis. Does not appear to form trans-homodimers. Interacts with ITGB3; the interaction inhibits ITGAV:ITGB3 heterodimer formation.

It is found in the cell membrane. The protein localises to the cell junction. The protein resides in the tight junction. It localises to the cytoplasm. Its subcellular location is the cell projection. It is found in the cilium membrane. The protein localises to the nucleus. Functionally, transmembrane protein which can modulate activity of various signaling pathways, probably via binding to integrin ITGAV:ITGB3. Mediates heterophilic cell-cell interactions in vitro. Inhibits osteoclastogenesis downstream of TNFSF11/RANKL and CSF1, where it may function by attenuating signaling via integrin ITGB3 and MAP kinase p38. Plays a role in cartilage formation where it promotes proliferation and maturation of growth plate chondrocytes. Stimulates formation of primary cilia in chondrocytes. Enhances expression of genes involved in the hedgehog signaling pathway in chondrocytes, including the hedgehog signaling molecule IHH; may also promote signaling via the PTHLH/PTHrP pathway. Plays a role in angiogenesis where it suppresses migration of endothelial cells and also promotes their apoptosis. Inhibits VEGF-induced activation of AKT and p38 MAP kinase in endothelial cells. Also inhibits VTN (vitronectin)-mediated integrin ITGAV:ITGB3 signaling and activation of PTK2/FAK. May play a role in the maturation and maintenance of the blood-brain barrier. The chain is Matrix remodeling-associated protein 8 (MXRA8) from Bos taurus (Bovine).